Here is a 218-residue protein sequence, read N- to C-terminus: MKKKVRVIPRTSWAATSLWTAQYKTISILLFALSILGIGDGLIVLSGLGSTPWTVLSQGIAIQTNFDIGWSSFLISCAVMLVWKPLKLRLGLGTLLNIIVIALFLGITTKILAPPTALFSRMIFCLIGILLYGFGTALYLTCHLGAGPRDGLMVGICQRFHLSINVVRSSLEISVCLLGFLLGGVVGLGTVLFATSIGSVVQFFLNIIARLPHIPYEK.

The next 5 helical transmembrane spans lie at isoleucine 28–leucine 48, phenylalanine 66–leucine 86, leucine 92–leucine 112, methionine 122–cysteine 142, and isoleucine 173–phenylalanine 193.

It localises to the cell membrane. This is an uncharacterized protein from Haemophilus influenzae (strain ATCC 51907 / DSM 11121 / KW20 / Rd).